We begin with the raw amino-acid sequence, 126 residues long: Profilin (126 aa).

Belongs to the profilin family. In terms of assembly, occurs in many kinds of cells as a complex with monomeric actin in a 1:1 ratio.

It is found in the cytoplasm. The protein localises to the cytoskeleton. Binds to actin and affects the structure of the cytoskeleton. At high concentrations, profilin prevents the polymerization of actin, whereas it enhances it at low concentrations. By binding to PIP2, it inhibits the formation of IP3 and DG. The polypeptide is Profilin (PFY1) (Saccharomyces cerevisiae (strain ATCC 204508 / S288c) (Baker's yeast)).